A 573-amino-acid chain; its full sequence is 2-succinyl-5-enolpyruvyl-6-hydroxy-3-cyclohexene-1-carboxylate synthase (573 aa).

The protein belongs to the TPP enzyme family. MenD subfamily. As to quaternary structure, homodimer. It depends on Mg(2+) as a cofactor. Mn(2+) is required as a cofactor. Thiamine diphosphate serves as cofactor.

The catalysed reaction is isochorismate + 2-oxoglutarate + H(+) = 5-enolpyruvoyl-6-hydroxy-2-succinyl-cyclohex-3-ene-1-carboxylate + CO2. The protein operates within quinol/quinone metabolism; 1,4-dihydroxy-2-naphthoate biosynthesis; 1,4-dihydroxy-2-naphthoate from chorismate: step 2/7. Its pathway is quinol/quinone metabolism; menaquinone biosynthesis. Functionally, catalyzes the thiamine diphosphate-dependent decarboxylation of 2-oxoglutarate and the subsequent addition of the resulting succinic semialdehyde-thiamine pyrophosphate anion to isochorismate to yield 2-succinyl-5-enolpyruvyl-6-hydroxy-3-cyclohexene-1-carboxylate (SEPHCHC). The polypeptide is 2-succinyl-5-enolpyruvyl-6-hydroxy-3-cyclohexene-1-carboxylate synthase (Shewanella oneidensis (strain ATCC 700550 / JCM 31522 / CIP 106686 / LMG 19005 / NCIMB 14063 / MR-1)).